Here is a 75-residue protein sequence, read N- to C-terminus: Antimicrobial peptide ctriporin (75 aa).

The first 22 residues, 1–22 (MDSKYLFVFLIFNVIVIDLCQG), serve as a signal peptide directing secretion. The residue at position 41 (K41) is a Lysine amide. A propeptide spanning residues 47–75 (ELGSQYDYLQDFRKRELDLDDLLSKFPDY) is cleaved from the precursor.

Belongs to the non-disulfide-bridged peptide (NDBP) superfamily. Short antimicrobial peptide (group 4) family. Expressed by the venom gland.

It localises to the secreted. The protein localises to the target cell membrane. In terms of biological role, antimicrobial peptide that acts by breaking the cell wall. Is active against Gram-positive bacteria, fungi and antibiotic-resistant pathogens: S.aureus (MIC=5 ug/ml), M.luteus (MIC=5 ug/ml), B.thuringiensis (MIC=10 ug/ml), B.subtilis (MIC=10 ug/ml), C.albicans (MIC=20 ug/ml), methicillin-resistant S.aureus (MIC=5-10 ug/ml), and penicillin-resistant S.epidermidis (MIC=10 ug/ml). Also shows potent activity against antibiotic-sensitive and -resistant Acinetobacter baumannii (MIC=10-20 uM). Shows cytolytic activity against human erythrocytes. In vivo, is efficient in curing staphylococcal skin infection in mice, when externally applied. In Chaerilus tricostatus (Scorpion), this protein is Antimicrobial peptide ctriporin.